Reading from the N-terminus, the 345-residue chain is Phosphoribosylformylglycinamidine cyclo-ligase (345 aa).

This sequence belongs to the AIR synthase family.

The protein localises to the cytoplasm. The catalysed reaction is 2-formamido-N(1)-(5-O-phospho-beta-D-ribosyl)acetamidine + ATP = 5-amino-1-(5-phospho-beta-D-ribosyl)imidazole + ADP + phosphate + H(+). Its pathway is purine metabolism; IMP biosynthesis via de novo pathway; 5-amino-1-(5-phospho-D-ribosyl)imidazole from N(2)-formyl-N(1)-(5-phospho-D-ribosyl)glycinamide: step 2/2. The sequence is that of Phosphoribosylformylglycinamidine cyclo-ligase from Shewanella amazonensis (strain ATCC BAA-1098 / SB2B).